The following is a 422-amino-acid chain: NADP-dependent malic enzyme (422 aa).

Tyr39 functions as the Proton donor in the catalytic mechanism. The active-site Proton acceptor is the Lys94. Position 94 (Lys94) interacts with substrate. A divalent metal cation is bound by residues Glu136, Asp137, and Asp162. NADP(+)-binding positions include 195-198 (AGAA), Asn286, and Asn318. A substrate-binding site is contributed by Asn318.

Belongs to the malic enzymes family. The cofactor is Mg(2+). It depends on Mn(2+) as a cofactor.

The enzyme catalyses (S)-malate + NADP(+) = pyruvate + CO2 + NADPH. The catalysed reaction is oxaloacetate + H(+) = pyruvate + CO2. The sequence is that of NADP-dependent malic enzyme from Halomonas elongata (strain ATCC 33173 / DSM 2581 / NBRC 15536 / NCIMB 2198 / 1H9).